Reading from the N-terminus, the 699-residue chain is Elongation factor G (699 aa).

The tr-type G domain occupies 8 to 288 (EDYRNFGIMA…AVVDYLPSPL (281 aa)). GTP-binding positions include 17 to 24 (AHIDAGKT), 86 to 90 (DTPGH), and 140 to 143 (NKMD).

The protein belongs to the TRAFAC class translation factor GTPase superfamily. Classic translation factor GTPase family. EF-G/EF-2 subfamily.

Its subcellular location is the cytoplasm. Its function is as follows. Catalyzes the GTP-dependent ribosomal translocation step during translation elongation. During this step, the ribosome changes from the pre-translocational (PRE) to the post-translocational (POST) state as the newly formed A-site-bound peptidyl-tRNA and P-site-bound deacylated tRNA move to the P and E sites, respectively. Catalyzes the coordinated movement of the two tRNA molecules, the mRNA and conformational changes in the ribosome. The chain is Elongation factor G from Rhizobium etli (strain ATCC 51251 / DSM 11541 / JCM 21823 / NBRC 15573 / CFN 42).